The following is a 431-amino-acid chain: 3-phosphoshikimate 1-carboxyvinyltransferase (431 aa).

3-phosphoshikimate contacts are provided by lysine 22, serine 23, and arginine 27. Position 22 (lysine 22) interacts with phosphoenolpyruvate. The phosphoenolpyruvate site is built by glycine 94 and arginine 122. Positions 167, 169, 314, and 341 each coordinate 3-phosphoshikimate. Glutamine 169 lines the phosphoenolpyruvate pocket. The active-site Proton acceptor is aspartate 314. The phosphoenolpyruvate site is built by arginine 345 and arginine 391.

Belongs to the EPSP synthase family. In terms of assembly, monomer.

It localises to the cytoplasm. The catalysed reaction is 3-phosphoshikimate + phosphoenolpyruvate = 5-O-(1-carboxyvinyl)-3-phosphoshikimate + phosphate. It functions in the pathway metabolic intermediate biosynthesis; chorismate biosynthesis; chorismate from D-erythrose 4-phosphate and phosphoenolpyruvate: step 6/7. Functionally, catalyzes the transfer of the enolpyruvyl moiety of phosphoenolpyruvate (PEP) to the 5-hydroxyl of shikimate-3-phosphate (S3P) to produce enolpyruvyl shikimate-3-phosphate and inorganic phosphate. The protein is 3-phosphoshikimate 1-carboxyvinyltransferase of Leuconostoc citreum (strain KM20).